We begin with the raw amino-acid sequence, 483 residues long: UDP-N-acetylmuramyl-tripeptide synthetase (483 aa).

S43 is a binding site for UDP-N-acetyl-alpha-D-muramoyl-L-alanyl-D-glutamate. 116 to 122 (GTKGKTT) contacts ATP. UDP-N-acetyl-alpha-D-muramoyl-L-alanyl-D-glutamate contacts are provided by residues 160 to 161 (TT), S187, and R195. Position 229 is an N6-carboxylysine (K229).

The protein belongs to the MurCDEF family. MurE subfamily. Post-translationally, carboxylation is probably crucial for Mg(2+) binding and, consequently, for the gamma-phosphate positioning of ATP.

Its subcellular location is the cytoplasm. The protein operates within cell wall biogenesis; peptidoglycan biosynthesis. In terms of biological role, catalyzes the addition of an amino acid to the nucleotide precursor UDP-N-acetylmuramoyl-L-alanyl-D-glutamate (UMAG) in the biosynthesis of bacterial cell-wall peptidoglycan. The chain is UDP-N-acetylmuramyl-tripeptide synthetase from Lactococcus lactis subsp. cremoris (strain SK11).